A 178-amino-acid chain; its full sequence is TM2 domain-containing protein biscotti (178 aa).

A signal peptide spans 1 to 18 (MFPVLLLLLFFFAKETHQ). Residues 19-99 (INVDCNELQM…YHLDTTLLLS (81 aa)) lie on the Extracellular side of the membrane. N-linked (GlcNAc...) asparagine glycans are attached at residues Asn69 and Asn75. A TM2 domain is found at 94-137 (TTLLLSVFLGMFGVDRFYLGYPGIGLLKFCTLGGMFLGQLIDIV). Residues 100-120 (VFLGMFGVDRFYLGYPGIGLL) traverse the membrane as a helical segment. Residues 121 to 124 (KFCT) are Cytoplasmic-facing. Residues 125–145 (LGGMFLGQLIDIVLIALQVVG) form a helical membrane-spanning segment. At 146 to 178 (PADGSAYVIPYYGAGIHIVRSDNTTYRLPRDDW) the chain is on the extracellular side. An N-linked (GlcNAc...) asparagine glycan is attached at Asn168.

The protein belongs to the TM2 family.

It is found in the membrane. In terms of biological role, positive regulator of Notch signaling. Maternal neurogenic factor involved in Notch signaling-dependent neuroectodermal specification during early embryogenesis. Functions cooperatively with amx/TM2D3 and amrt/TM2D2. This chain is TM2 domain-containing protein biscotti, found in Drosophila melanogaster (Fruit fly).